Consider the following 941-residue polypeptide: Bifunctional glutamine synthetase adenylyltransferase/adenylyl-removing enzyme (941 aa).

Residues 1–437 are adenylyl removase; that stretch reads MSIPTASLSP…TAEFAELLAP (437 aa). The tract at residues 444–941 is adenylyl transferase; it reads PDTLADYWRA…FPLGKDEAAL (498 aa).

This sequence belongs to the GlnE family. Mg(2+) is required as a cofactor.

It catalyses the reaction [glutamine synthetase]-O(4)-(5'-adenylyl)-L-tyrosine + phosphate = [glutamine synthetase]-L-tyrosine + ADP. The enzyme catalyses [glutamine synthetase]-L-tyrosine + ATP = [glutamine synthetase]-O(4)-(5'-adenylyl)-L-tyrosine + diphosphate. Functionally, involved in the regulation of glutamine synthetase GlnA, a key enzyme in the process to assimilate ammonia. When cellular nitrogen levels are high, the C-terminal adenylyl transferase (AT) inactivates GlnA by covalent transfer of an adenylyl group from ATP to specific tyrosine residue of GlnA, thus reducing its activity. Conversely, when nitrogen levels are low, the N-terminal adenylyl removase (AR) activates GlnA by removing the adenylyl group by phosphorolysis, increasing its activity. The regulatory region of GlnE binds the signal transduction protein PII (GlnB) which indicates the nitrogen status of the cell. The sequence is that of Bifunctional glutamine synthetase adenylyltransferase/adenylyl-removing enzyme from Xanthomonas oryzae pv. oryzae (strain MAFF 311018).